The following is an 841-amino-acid chain: Formin-like protein 10 (841 aa).

The signal sequence occupies residues 1-25 (MDGLCYVIFIIFSLLSCAFSPLSYA). Residues 102-122 (LIPAISAVLAAATLIALAFFF) traverse the membrane as a helical segment. Disordered stretches follow at residues 137–166 (SKSL…QNKL), 254–297 (ISSH…RTVR), and 403–512 (KSSW…SKQR). Positions 139–152 (SLASDISQSQQQTL) are enriched in polar residues. Residues 254 to 278 (ISSHSDSPAMSPSAAMSPPMNSTAP) show a composition bias toward low complexity. Residues 279 to 293 (HWSTNQNTHSPSSPE) show a composition bias toward polar residues. The segment covering 426–444 (LPPPQRPPPAMPEPPPLVP) has biased composition (pro residues). The 373-residue stretch at 469-841 (EGTTDRPKPK…KKMEVTSSLA (373 aa)) folds into the FH2 domain. Residues 502-512 (YNSSNANSKQR) are compositionally biased toward polar residues.

This sequence belongs to the formin-like family. Class-I subfamily.

Its subcellular location is the membrane. Functionally, might be involved in the organization and polarity of the actin cytoskeleton. The sequence is that of Formin-like protein 10 (FH10) from Arabidopsis thaliana (Mouse-ear cress).